The chain runs to 768 residues: ATP-dependent zinc metalloprotease FtsH (768 aa).

The Cytoplasmic segment spans residues 1 to 33 (MADRDKNDIRKRLEELRKDNNRRNNRQDNGNRS). A helical transmembrane segment spans residues 34 to 54 (PFSGFLFFIFVILLFTFTLLF). Topologically, residues 55–139 (HRDIQTYFQE…KLNSLQPSGG (85 aa)) are periplasmic. The chain crosses the membrane as a helical span at residues 140–160 (GFFLLLLGQFLPMIIMIGLMV). Residues 161–768 (YLAKKMVGGS…SNFKLPSFME (608 aa)) are Cytoplasmic-facing. 238-245 (GRPGTGKT) serves as a coordination point for ATP. His-461 serves as a coordination point for Zn(2+). Glu-462 is an active-site residue. Zn(2+) is bound by residues His-465 and Asp-536. The interval 647-768 (EESIQKGSEG…SNFKLPSFME (122 aa)) is disordered. Residues 669 to 698 (QENKTVEAEVHDSNLKSDTEKLAEAVREIT) are compositionally biased toward basic and acidic residues. A compositionally biased stretch (acidic residues) spans 715 to 731 (KDSDDNEKNDDDNENSD).

It in the central section; belongs to the AAA ATPase family. The protein in the C-terminal section; belongs to the peptidase M41 family. Homohexamer. Zn(2+) is required as a cofactor.

It localises to the cell inner membrane. Its function is as follows. Acts as a processive, ATP-dependent zinc metallopeptidase for both cytoplasmic and membrane proteins. Plays a role in the quality control of integral membrane proteins. This is ATP-dependent zinc metalloprotease FtsH from Leptotrichia buccalis (strain ATCC 14201 / DSM 1135 / JCM 12969 / NCTC 10249 / C-1013-b).